The following is a 188-amino-acid chain: MTKMIVGLGNPGDKYEKTKHNMGFMALDLLAKELNVDFKEEKPFMSLVASTFVNGEKLFLVKPLTFMNESGRSVAPLLKYYNIDEADLTVMHDDLDSPVGRVRLRQKGSSGGQNGIKSVITHVGSQTFNRVKIGIGRPKHGMTVGNHVLSGFDNEDKEIAQDGIFKAVDAMKFYLENGDFQKTMNKFN.

Tyr-15 contacts tRNA. Catalysis depends on His-20, which acts as the Proton acceptor. TRNA is bound by residues Phe-66, Asn-68, and Asn-114.

Belongs to the PTH family. Monomer.

The protein localises to the cytoplasm. The enzyme catalyses an N-acyl-L-alpha-aminoacyl-tRNA + H2O = an N-acyl-L-amino acid + a tRNA + H(+). Its function is as follows. Hydrolyzes ribosome-free peptidyl-tRNAs (with 1 or more amino acids incorporated), which drop off the ribosome during protein synthesis, or as a result of ribosome stalling. Functionally, catalyzes the release of premature peptidyl moieties from peptidyl-tRNA molecules trapped in stalled 50S ribosomal subunits, and thus maintains levels of free tRNAs and 50S ribosomes. The sequence is that of Peptidyl-tRNA hydrolase from Lactococcus lactis subsp. lactis (strain IL1403) (Streptococcus lactis).